The primary structure comprises 403 residues: Casein kinase I isoform delta-A (403 aa).

In terms of domain architecture, Protein kinase spans 9-277 (YRLGRKIGSG…YLRQLFRNLF (269 aa)). ATP contacts are provided by residues 15 to 23 (IGSGSFGDI) and lysine 38. Aspartate 128 serves as the catalytic Proton acceptor. The interval 315-340 (QGRIPLPRVMLPTSSGRPRGTQEVAP) is autoinhibitory. The segment at 322 to 403 (RVMLPTSSGR…PSGLQSAVPR (82 aa)) is disordered.

It belongs to the protein kinase superfamily. Monomer. Interacts with per1 and per2. Component of the circadian core oscillator. Autophosphorylated on serine and threonine residues.

It localises to the cytoplasm. Its subcellular location is the nucleus. The enzyme catalyses L-seryl-[protein] + ATP = O-phospho-L-seryl-[protein] + ADP + H(+). The catalysed reaction is L-threonyl-[protein] + ATP = O-phospho-L-threonyl-[protein] + ADP + H(+). With respect to regulation, exhibits substrate-dependent heparin activation. Casein kinases are operationally defined by their preferential utilization of acidic proteins such as caseins as substrates. Central component of the circadian clock. May act as a negative regulator of circadian rhythmicity by phosphorylating per1 and per2, which may lead to their degradation. Participates in wnt signaling. This Danio rerio (Zebrafish) protein is Casein kinase I isoform delta-A (csnk1da).